The sequence spans 391 residues: Phosphoglycerate kinase (391 aa).

Substrate-binding positions include 21–23 (DLN), R36, 59–62 (HLGR), R113, and R146. Residues K197, E319, and 345–348 (GGDT) each bind ATP.

Belongs to the phosphoglycerate kinase family. Monomer.

It localises to the cytoplasm. It catalyses the reaction (2R)-3-phosphoglycerate + ATP = (2R)-3-phospho-glyceroyl phosphate + ADP. It participates in carbohydrate degradation; glycolysis; pyruvate from D-glyceraldehyde 3-phosphate: step 2/5. The polypeptide is Phosphoglycerate kinase (Shewanella frigidimarina (strain NCIMB 400)).